A 342-amino-acid polypeptide reads, in one-letter code: tRNA N6-adenosine threonylcarbamoyltransferase (342 aa).

The Fe cation site is built by H111 and H115. Residues 134 to 138 (LVSGG), D167, G180, and N276 contribute to the substrate site. D304 lines the Fe cation pocket.

Belongs to the KAE1 / TsaD family. Fe(2+) is required as a cofactor.

Its subcellular location is the cytoplasm. The catalysed reaction is L-threonylcarbamoyladenylate + adenosine(37) in tRNA = N(6)-L-threonylcarbamoyladenosine(37) in tRNA + AMP + H(+). In terms of biological role, required for the formation of a threonylcarbamoyl group on adenosine at position 37 (t(6)A37) in tRNAs that read codons beginning with adenine. Is involved in the transfer of the threonylcarbamoyl moiety of threonylcarbamoyl-AMP (TC-AMP) to the N6 group of A37, together with TsaE and TsaB. TsaD likely plays a direct catalytic role in this reaction. The protein is tRNA N6-adenosine threonylcarbamoyltransferase of Helicobacter acinonychis (strain Sheeba).